The chain runs to 143 residues: Putative pre-16S rRNA nuclease (143 aa).

Belongs to the YqgF nuclease family.

Its subcellular location is the cytoplasm. In terms of biological role, could be a nuclease involved in processing of the 5'-end of pre-16S rRNA. In Agathobacter rectalis (strain ATCC 33656 / DSM 3377 / JCM 17463 / KCTC 5835 / VPI 0990) (Eubacterium rectale), this protein is Putative pre-16S rRNA nuclease.